The chain runs to 491 residues: Ribonuclease Y (491 aa).

Residues 4 to 24 form a helical membrane-spanning segment; the sequence is LIATVGVVAVAALVIAIFVVI. A KH domain is found at 181–247; it reads VVSVVHLPGD…RVALERLVDD (67 aa). The HD domain occupies 307-400; sequence VLKHLVETAH…TQAADAISGG (94 aa).

The protein belongs to the RNase Y family.

Its subcellular location is the cell membrane. In terms of biological role, endoribonuclease that initiates mRNA decay. The protein is Ribonuclease Y of Acidothermus cellulolyticus (strain ATCC 43068 / DSM 8971 / 11B).